A 496-amino-acid chain; its full sequence is N-succinylglutamate 5-semialdehyde dehydrogenase (496 aa).

229–234 (GSYATG) serves as a coordination point for NAD(+). Active-site residues include glutamate 252 and cysteine 286.

This sequence belongs to the aldehyde dehydrogenase family. AstD subfamily.

The enzyme catalyses N-succinyl-L-glutamate 5-semialdehyde + NAD(+) + H2O = N-succinyl-L-glutamate + NADH + 2 H(+). The protein operates within amino-acid degradation; L-arginine degradation via AST pathway; L-glutamate and succinate from L-arginine: step 4/5. Catalyzes the NAD-dependent reduction of succinylglutamate semialdehyde into succinylglutamate. This Legionella pneumophila subsp. pneumophila (strain Philadelphia 1 / ATCC 33152 / DSM 7513) protein is N-succinylglutamate 5-semialdehyde dehydrogenase.